The chain runs to 322 residues: MQKNRNTFSWVKEQMTRCISVSMMIYVITRASISNAYPIFAQQSYENPREATGRIVCANCHLANKPVDIEVPQAVLPDTVFEAVVRIPYDMQLKQVLANGKKGGLNVGAVLILPEGFELAPPDRISPEMKEKMGNLSFQSYRPNKKNILVVGPVPGQKYSEIVFPILSPDPATKKEVHFLKYPIYVGGNRGRGQIYPDGSKSNNTVYNASAAGIVSKIVRKEKKGGYEITISDASNGHETVDIIPPGPELLVSEGEYIKLDQPLTSNPNVGGFGQGDAEIVLQDPLRIQGLLFFLASVILAQIFLVLKKKQFEKVQLAEMNF.

The N-terminal stretch at 1–36 is a signal peptide; that stretch reads MQKNRNTFSWVKEQMTRCISVSMMIYVITRASISNA. Residues Y37, C57, C60, and H61 each contribute to the heme site. Residues 288-308 traverse the membrane as a helical segment; sequence IQGLLFFLASVILAQIFLVLK.

It belongs to the cytochrome f family. As to quaternary structure, the 4 large subunits of the cytochrome b6-f complex are cytochrome b6, subunit IV (17 kDa polypeptide, petD), cytochrome f and the Rieske protein, while the 4 small subunits are PetG, PetL, PetM and PetN. The complex functions as a dimer. Requires heme as cofactor.

It localises to the plastid. The protein localises to the chloroplast thylakoid membrane. In terms of biological role, component of the cytochrome b6-f complex, which mediates electron transfer between photosystem II (PSII) and photosystem I (PSI), cyclic electron flow around PSI, and state transitions. The protein is Cytochrome f of Nymphaea alba (White water-lily).